Here is a 527-residue protein sequence, read N- to C-terminus: (3S)-3-amino-3-(3-chloro-4-hydroxyphenyl)propanoyl-[peptidyl-carrier protein SgcC2] monooxygenase (527 aa).

A compositionally biased stretch (basic and acidic residues) spans 1–10; sequence MPHGAEREAS. Positions 1–22 are disordered; the sequence is MPHGAEREASPAEESAGTRPLT. Residues 161-163, 167-170, and threonine 202 each bind FAD; these read HAF and PVDR.

It belongs to the FADH(2)-utilizing monooxygenase family. Homotetramer.

It catalyses the reaction (3S)-3-amino-3-(3-chloro-4-hydroxyphenyl)propanoyl-[SgcC2 peptidyl-carrier protein] + FADH2 + O2 = (3S)-3-amino-3-(3-chloro-4,5-dihydroxyphenyl)propanoyl-[SgcC2 peptidyl-carrier protein] + FAD + H2O + H(+). It participates in antibiotic biosynthesis. Its activity is regulated as follows. The SgcE6-SgcC hydroxylation activity decreases in the presence of excess FAD. In terms of biological role, oxygenase component of a two-component system involved in the biosynthesis of the enediyne antitumor antibiotic C-1027. Uses FADH(2) supplied by SgcE6 to catalyze the C-5 hydroxylation of (S)-3-chloro-beta-tyrosyl-S-SgcC2. Can also efficiently catalyze the regioselective hydroxylation of other 3-substituted beta-tyrosyl-S-SgcC2 analogs, including the bromo-, iodo-, fluoro-, and methyl-substituted analogs, but does not accept 3-hydroxy-beta-tyrosyl-S-SgcC2 as a substrate. Is only active with SgcC2 (peptidyl carrier protein)-tethered substrates. In Streptomyces globisporus, this protein is (3S)-3-amino-3-(3-chloro-4-hydroxyphenyl)propanoyl-[peptidyl-carrier protein SgcC2] monooxygenase.